Consider the following 120-residue polypeptide: Large ribosomal subunit protein eL8 (120 aa).

It belongs to the eukaryotic ribosomal protein eL8 family. As to quaternary structure, part of the 50S ribosomal subunit. Probably part of the RNase P complex.

The protein localises to the cytoplasm. Functionally, multifunctional RNA-binding protein that recognizes the K-turn motif in ribosomal RNA, the RNA component of RNase P, box H/ACA, box C/D and box C'/D' sRNAs. This Halobacterium salinarum (strain ATCC 29341 / DSM 671 / R1) protein is Large ribosomal subunit protein eL8.